Here is a 235-residue protein sequence, read N- to C-terminus: Urease accessory protein UreF (235 aa).

It belongs to the UreF family. In terms of assembly, ureD, UreF and UreG form a complex that acts as a GTP-hydrolysis-dependent molecular chaperone, activating the urease apoprotein by helping to assemble the nickel containing metallocenter of UreC. The UreE protein probably delivers the nickel.

The protein localises to the cytoplasm. Its function is as follows. Required for maturation of urease via the functional incorporation of the urease nickel metallocenter. The polypeptide is Urease accessory protein UreF (Ureaplasma parvum serovar 3 (strain ATCC 27815 / 27 / NCTC 11736)).